A 407-amino-acid chain; its full sequence is Serine hydroxymethyltransferase (407 aa).

(6S)-5,6,7,8-tetrahydrofolate contacts are provided by residues Leu-120 and 124 to 126 (GHL). An N6-(pyridoxal phosphate)lysine modification is found at Lys-229.

The protein belongs to the SHMT family. In terms of assembly, homodimer. The cofactor is pyridoxal 5'-phosphate.

It is found in the cytoplasm. The catalysed reaction is (6R)-5,10-methylene-5,6,7,8-tetrahydrofolate + glycine + H2O = (6S)-5,6,7,8-tetrahydrofolate + L-serine. It functions in the pathway one-carbon metabolism; tetrahydrofolate interconversion. The protein operates within amino-acid biosynthesis; glycine biosynthesis; glycine from L-serine: step 1/1. Functionally, catalyzes the reversible interconversion of serine and glycine with tetrahydrofolate (THF) serving as the one-carbon carrier. This reaction serves as the major source of one-carbon groups required for the biosynthesis of purines, thymidylate, methionine, and other important biomolecules. Also exhibits THF-independent aldolase activity toward beta-hydroxyamino acids, producing glycine and aldehydes, via a retro-aldol mechanism. The protein is Serine hydroxymethyltransferase of Deinococcus deserti (strain DSM 17065 / CIP 109153 / LMG 22923 / VCD115).